Consider the following 303-residue polypeptide: MDDVPFLKGHATRNDFVILPDHDDELELDAALVRAICDRRRGLGADGILRVVAVPADDAPVSSAGATADAAAGRPPQPSAGRPPQPAAARWFMDYRNADGSVAEICGNGIRLFARYLVDAGLEEAGRFLVGTRIGPVPVDVPPAGDVTAWLPAPELRGGGRARFDGRMLEGVRVSVGNPHLVCVVDTLADVDFTRAPVLDSDEFPDGANVEVVEIERPGVLRMRVYERGVGETWSCGSGACAVAAVAEGAERIPRPADGWWRIVVPGGELRIRFDGDRVALAGPAVVVAEGRLHLAALEKSDG.

Asparagine 14 contributes to the substrate binding site. Over residues 60 to 74 (PVSSAGATADAAAGR) the composition is skewed to low complexity. A disordered region spans residues 60–86 (PVSSAGATADAAAGRPPQPSAGRPPQP). Residues 75 to 86 (PPQPSAGRPPQP) are compositionally biased toward pro residues. Substrate is bound at residue asparagine 97. The active-site Proton donor is the cysteine 106. Substrate is bound by residues 107–108 (GN), asparagine 178, asparagine 209, and 227–228 (ER). The Proton acceptor role is filled by cysteine 236. 237-238 (GS) is a binding site for substrate.

The protein belongs to the diaminopimelate epimerase family. In terms of assembly, homodimer.

It is found in the cytoplasm. It catalyses the reaction (2S,6S)-2,6-diaminopimelate = meso-2,6-diaminopimelate. The protein operates within amino-acid biosynthesis; L-lysine biosynthesis via DAP pathway; DL-2,6-diaminopimelate from LL-2,6-diaminopimelate: step 1/1. In terms of biological role, catalyzes the stereoinversion of LL-2,6-diaminopimelate (L,L-DAP) to meso-diaminopimelate (meso-DAP), a precursor of L-lysine and an essential component of the bacterial peptidoglycan. The polypeptide is Diaminopimelate epimerase (Acidothermus cellulolyticus (strain ATCC 43068 / DSM 8971 / 11B)).